The following is a 215-amino-acid chain: Urease accessory protein UreG (215 aa).

24–31 (GPVGSGKT) lines the GTP pocket.

This sequence belongs to the SIMIBI class G3E GTPase family. UreG subfamily. In terms of assembly, homodimer. UreD, UreF and UreG form a complex that acts as a GTP-hydrolysis-dependent molecular chaperone, activating the urease apoprotein by helping to assemble the nickel containing metallocenter of UreC. The UreE protein probably delivers the nickel.

The protein localises to the cytoplasm. Its function is as follows. Facilitates the functional incorporation of the urease nickel metallocenter. This process requires GTP hydrolysis, probably effectuated by UreG. In Burkholderia ambifaria (strain MC40-6), this protein is Urease accessory protein UreG.